The sequence spans 425 residues: Enolase (425 aa).

(2R)-2-phosphoglycerate is bound at residue Gln163. The active-site Proton donor is the Glu205. The Mg(2+) site is built by Asp242, Glu285, and Asp312. (2R)-2-phosphoglycerate contacts are provided by Lys337, Arg366, Ser367, and Lys388. Residue Lys337 is the Proton acceptor of the active site.

The protein belongs to the enolase family. Mg(2+) is required as a cofactor.

The protein localises to the cytoplasm. Its subcellular location is the secreted. It localises to the cell surface. The enzyme catalyses (2R)-2-phosphoglycerate = phosphoenolpyruvate + H2O. Its pathway is carbohydrate degradation; glycolysis; pyruvate from D-glyceraldehyde 3-phosphate: step 4/5. Its function is as follows. Catalyzes the reversible conversion of 2-phosphoglycerate (2-PG) into phosphoenolpyruvate (PEP). It is essential for the degradation of carbohydrates via glycolysis. The protein is Enolase of Cereibacter sphaeroides (strain ATCC 17029 / ATH 2.4.9) (Rhodobacter sphaeroides).